A 175-amino-acid polypeptide reads, in one-letter code: Ribosome maturation factor RimM (175 aa).

In terms of domain architecture, PRC barrel spans Glu98–Phe175.

It belongs to the RimM family. As to quaternary structure, binds ribosomal protein uS19.

The protein resides in the cytoplasm. In terms of biological role, an accessory protein needed during the final step in the assembly of 30S ribosomal subunit, possibly for assembly of the head region. Essential for efficient processing of 16S rRNA. May be needed both before and after RbfA during the maturation of 16S rRNA. It has affinity for free ribosomal 30S subunits but not for 70S ribosomes. In Pseudomonas aeruginosa (strain UCBPP-PA14), this protein is Ribosome maturation factor RimM.